A 608-amino-acid chain; its full sequence is Zinc metalloproteinase-disintegrin-like agkihagin (608 aa).

The first 20 residues, 1 to 20 (MIQVLLVTICLAAFPYQGSS), serve as a signal peptide directing secretion. A propeptide spanning residues 21–189 (IILESGNVND…KKASQSNLTP (169 aa)) is cleaved from the precursor. Residues 199–395 (KFVKLFLVAD…NMPQCILKKP (197 aa)) form the Peptidase M12B domain. Cystine bridges form between Cys310/Cys390, Cys350/Cys374, and Cys352/Cys357. Residue His335 coordinates Zn(2+). Residue Glu336 is part of the active site. Zn(2+) is bound by residues His339 and His345. The 86-residue stretch at 403–488 (PPVCGNYFVE…ADCTDRFQKN (86 aa)) folds into the Disintegrin domain. Ca(2+)-binding residues include Val405, Asn408, Phe410, Glu412, Glu415, and Asp418. Disulfide bonds link Cys406–Cys435, Cys417–Cys430, Cys419–Cys425, Cys429–Cys452, Cys443–Cys449, Cys448–Cys474, Cys461–Cys481, Cys468–Cys499, Cys492–Cys504, Cys511–Cys561, Cys526–Cys570, Cys539–Cys549, Cys556–Cys596, and Cys590–Cys601. The D/ECD-tripeptide motif lies at 467–469 (ECD). Asp469, Met470, Asp472, Asp483, and Arg484 together coordinate Ca(2+). N-linked (GlcNAc...) asparagine glycosylation is present at Asn501.

Belongs to the venom metalloproteinase (M12B) family. P-III subfamily. P-IIIc sub-subfamily. In terms of assembly, homodimer; disulfide-linked. Zn(2+) serves as cofactor. As to expression, expressed by the venom gland.

The protein localises to the secreted. Inhibited by EDTA and EGTA. Not inhibited by PMSF, antipain, pepstatin, and iodoacetamide. Functionally, strongly inhibits the collagen-induced human platelet aggregation. Hydrolyzes the Aalpha-chain of fibrinogen (FGA), without cleavage of Bbeta- and gamma-chains. Induces apoptosis and strongly inhibits proliferation of endothelial cells as well as adhesion of the cells to extracellular matrix proteins. The protein is Zinc metalloproteinase-disintegrin-like agkihagin of Deinagkistrodon acutus (Hundred-pace snake).